Reading from the N-terminus, the 1265-residue chain is Protein FAM193A (1265 aa).

Residues 107 to 142 (SEDTYSTLLQRYQRSEEELRRVAEEWLECQKRIDAY) are a coiled coil. The segment at 247-272 (APDYLAERSPPSVSSASSGSGSSSPI) is disordered. Residues 255-271 (SPPSVSSASSGSGSSSP) show a composition bias toward low complexity. At Ser-293 the chain carries Phosphoserine. Disordered regions lie at residues 331 to 407 (NGGG…EQAP), 553 to 586 (GSEILGPTLSETRPEALPPPSSNETPAVSDSKEK), 626 to 674 (VQSS…APLP), 750 to 785 (ENGVYDPQQDDGDESADEDSCSEHSSSTSTSTNQKE), 822 to 841 (LTKRKEEQPKKMDQISERES), 859 to 881 (ETKPVSSTRAAKRARHKQRKLEE), and 893 to 1163 (EHLH…DRVN). The segment covering 355–365 (EADDEEADGES) has biased composition (acidic residues). Phosphoserine is present on Ser-383. Phosphoserine is present on Ser-642. A compositionally biased stretch (acidic residues) spans 757 to 769 (QQDDGDESADEDS). The span at 772–781 (EHSSSTSTST) shows a compositional bias: low complexity. Basic residues predominate over residues 868–877 (AAKRARHKQR). Positions 873–932 (RHKQRKLEEKARLEAEARAREHLHLQEEQRRREEEEDEEEEEDRFKEEFQRLQELQKLRA) form a coiled coil. 2 stretches are compositionally biased toward basic and acidic residues: residues 893–905 (EHLHLQEEQRRRE) and 915–929 (DRFKEEFQRLQELQK). Basic residues predominate over residues 931-940 (RAVKKKKKER). A compositionally biased stretch (polar residues) spans 953–973 (RNFQAATESVPNSGNIHNGSL). Positions 1093–1118 (TEQKREERKVNSNNNNKKQLNHIKDE) form a coiled coil. 2 positions are modified to phosphoserine: Ser-1129 and Ser-1144. A compositionally biased stretch (basic residues) spans 1149–1159 (GKNKKNKKKKG).

It belongs to the FAM193 family.

The polypeptide is Protein FAM193A (FAM193A) (Homo sapiens (Human)).